The following is a 301-amino-acid chain: MVFTQAPAEIMGHLRIRSLLARQCLAEFLGVFVLMLLTQGAVAQAVTSGETKGNFFTMFLAGSLAVTIAIYVGGNVSGAHLNPAFSLAMCIVGRLPWVKLPIYILVQLLSAFCASGATYVLYHDALQNYTGGNLTVTGPKETASIFATYPAPYLSLNNGFLDQVLGTGMLIVGLLAILDRRNKGVPAGLEPVVVGMLILALGLSMGANCGIPLNPARDLGPRLFTYVAGWGPEVFSAGNGWWWVPVVAPLVGATVGTATYQLLVALHHPEGPEPAQDLVSAQHKASELETPASAQMLECKL.

Over 1–22 the chain is Cytoplasmic; the sequence is MVFTQAPAEIMGHLRIRSLLAR. A helical membrane pass occupies residues 23–41; it reads QCLAEFLGVFVLMLLTQGA. Residues 42–55 lie on the Extracellular side of the membrane; it reads VAQAVTSGETKGNF. Residues 56–75 traverse the membrane as a helical segment; sequence FTMFLAGSLAVTIAIYVGGN. Residues 76 to 77 are Cytoplasmic-facing; that stretch reads VS. The discontinuously helical intramembrane region spans 78–90; it reads GAHLNPAFSLAMC. Residues 82-84 carry the NPA 1 motif; it reads NPA. Topologically, residues 91-96 are cytoplasmic; it reads IVGRLP. Residues 97-121 form a helical membrane-spanning segment; sequence WVKLPIYILVQLLSAFCASGATYVL. The Extracellular segment spans residues 122–158; that stretch reads YHDALQNYTGGNLTVTGPKETASIFATYPAPYLSLNN. Residues N128 and N133 are each glycosylated (N-linked (GlcNAc...) asparagine). The chain crosses the membrane as a helical span at residues 159–176; it reads GFLDQVLGTGMLIVGLLA. The Cytoplasmic segment spans residues 177-188; it reads ILDRRNKGVPAG. The helical transmembrane segment at 189-205 threads the bilayer; the sequence is LEPVVVGMLILALGLSM. The Extracellular portion of the chain corresponds to 206 to 208; it reads GAN. Positions 209–223 form an intramembrane region, discontinuously helical; sequence CGIPLNPARDLGPRL. The NPA 2 signature appears at 214 to 216; sequence NPA. Over 224–241 the chain is Extracellular; it reads FTYVAGWGPEVFSAGNGW. Residues 242 to 262 form a helical membrane-spanning segment; that stretch reads WWVPVVAPLVGATVGTATYQL. Residues 263-301 are Cytoplasmic-facing; it reads LVALHHPEGPEPAQDLVSAQHKASELETPASAQMLECKL.

The protein belongs to the MIP/aquaporin (TC 1.A.8) family. As to quaternary structure, homotetramer; each monomer provides an independent glycerol/water pore. Post-translationally, N-glycosylation at Asn-133 increases the stability of the protein but has no effect on its activity. As to expression, detected in epithelial cells on villi in the ileum, and also in stomach, jejunum, colon, rectum, white adipose tissue and placenta (at protein level). Expressed in duodenum and jejunum. Highest expression in absorptive epithelial cells at the tips of villi in the jejunum. Detected in subcutaneous adipose tissue.

It localises to the apical cell membrane. The protein localises to the cell membrane. Its subcellular location is the lipid droplet. The enzyme catalyses glycerol(in) = glycerol(out). It carries out the reaction H2O(in) = H2O(out). It catalyses the reaction urea(in) = urea(out). Its activity is regulated as follows. Glycerol transport is regulated by pH, with the porin being permeable to glycerol at pH 5.5 but not at pH 7.4. Water permeability, however, is not influenced by pH. Its function is as follows. Aquaglyceroporins form homotetrameric transmembrane channels, with each monomer independently mediating glycerol and water transport across the plasma membrane along their osmotic gradient. Could also be permeable to urea. Among aquaglyceroporins, it exhibits a unique pH-gated glycerol transport activity, being more active at acidic pH. It most likely plays a central role in the efflux of glycerol formed during triglyceride hydrolysis in adipocytes and in glycerol uptake by enterocytes, as both processes occur and are stimulated at acidic pH. This is Aquaporin-10 from Homo sapiens (Human).